A 1035-amino-acid chain; its full sequence is MAVAPPLPPAPARLLRRWQGSSPWLSSSFGRTRYFSRPAFAAGGRQDYSPSSGMGVSKTGAFRLGLHGNLNVQSSVQEWVDETKRLFFLRTTNNVRNNITNGTTPLRVGNLRHDPSEDIRSSNYPSLYNQRERGPSNSIVNRHVDTDLAKHRVMYQSAHAVPAPFSVANNDIKPLNLLDGSKEEIPWHDSVTVESSLPKVSKSETTLVVDKAIPNKKEHKRITRKVTLNIPDKASLSTESKNARKLLATIYDKVLVVDNVESARSVVKLLTTKYKGFIHACDTEVANIDVKEETPVGHGEVICFSIYSGNSDGEADFGNGKTCIWVDVLDGGRDVLMEFAPFFEDPSIKKVWHNYSFDSHVIENCGIKVAGFHADTMHLARLWDSSRRADGGYSLEGLTNDHRIMNAVLKDIHKTGKVSMKTIFGRKNVRKNGSEGKTISIEPVKKLQREDRELWICYSSLDSMSTLKLYESLKNKLEAKEWIFDGCPRGTMYDFYEEYWRPFGALLVKMETEGMFVDRAYLSEIEKTAVVERKLAADKFRKWASKHCPDAKYMNVNSDNQIRQLFFGGIKNRNKPGETWPQSKAFKVPNDESIATEGKKIPKSRTIKLFTIVEDLKLFTTEGKKTTKTGWLKVRGDVLWSLAGKIPTDHIYKIDDDGQEFDEDGSSVELPEQDIEDTSPYGTAYEAFGGGKKGREACHAIAALCEVFSIDKLISGFIVPLQGDHISCKEGRIHCSLNINTETGRLSARTPSLQNQPALEKDRYKIRQAFVAAPGNTLIVADYGQLELRILAHLTNCKSMLEAFKAGGDFHSRTAMNMYQHVRDAVEEKKVLLEWHPQPGQDKPPVPLLKDAFGAERRKAKMLNFSIAYGKTAVGLSQDWNVEVREARDTLKLWHRDRKEISAWQKKQKALAFEKCEVYTLLGRSRQFPNMTHAGPGQKSHVERAAINAPVQGSAADVAMCAMLEIERNARLKELGWRLLLQVHDEVILEGPTESAEEAKAIVVECMSKPFYGTNILKVDLAVDAKYAKSWYAAK.

A mitochondrion-targeting transit peptide spans 1-42 (MAVAPPLPPAPARLLRRWQGSSPWLSSSFGRTRYFSRPAFAA). The interval 100 to 124 (TNGTTPLRVGNLRHDPSEDIRSSNY) is disordered. Basic and acidic residues predominate over residues 111-120 (LRHDPSEDIR). The 3'-5' exonuclease domain occupies 317–478 (FGNGKTCIWV…LYESLKNKLE (162 aa)). The polymerase stretch occupies residues 699–1032 (HAIAALCEVF…VDAKYAKSWY (334 aa)).

The protein belongs to the DNA polymerase type-A family.

The protein localises to the mitochondrion. It catalyses the reaction DNA(n) + a 2'-deoxyribonucleoside 5'-triphosphate = DNA(n+1) + diphosphate. Not inhibited by aphidicolin. Functionally, in addition to polymerase activity, this DNA polymerase exhibits 5'-3' exonuclease activity. May be required for DNA replication and accumulation in mitochondria. This is DNA polymerase I B, mitochondrial from Oryza sativa subsp. japonica (Rice).